The primary structure comprises 363 residues: Chorismate synthase (363 aa).

Residues arginine 48 and arginine 54 each coordinate NADP(+). FMN contacts are provided by residues 125 to 127, 237 to 238, glycine 277, 292 to 296, and arginine 318; these read RSS, NA, and KPTSS.

The protein belongs to the chorismate synthase family. As to quaternary structure, homotetramer. FMNH2 is required as a cofactor.

It catalyses the reaction 5-O-(1-carboxyvinyl)-3-phosphoshikimate = chorismate + phosphate. Its pathway is metabolic intermediate biosynthesis; chorismate biosynthesis; chorismate from D-erythrose 4-phosphate and phosphoenolpyruvate: step 7/7. Functionally, catalyzes the anti-1,4-elimination of the C-3 phosphate and the C-6 proR hydrogen from 5-enolpyruvylshikimate-3-phosphate (EPSP) to yield chorismate, which is the branch point compound that serves as the starting substrate for the three terminal pathways of aromatic amino acid biosynthesis. This reaction introduces a second double bond into the aromatic ring system. This Pseudomonas syringae pv. syringae (strain B728a) protein is Chorismate synthase.